Reading from the N-terminus, the 409-residue chain is MSIISTRLNSIKPSPTLAVVKKTLELKKAGVDIIALGAGEPDFDTPDNIKEAAIKAIKDGFTKYTNVEGMPLLKQAIKDKFKRENNIDYELDEIIVSTGGKQVIYNLFMASLDKGDKVIIPAPYWVSYPDMVALSTGTPVFVNCGIENNFKLSAEALERSITDKTKWLIINSPSNPTGASYNFEELENIAKVLRKYPHVNVMSDDIYEHITFDDFKFYTLAQIAPDLKERIFTVNGVSKAYSMTGWRIGYGVGSKALIKAMTIIQSQSTSNPCSISQMAAIESLNGPQDYIKPNALNFQKKRDLALSILKRVKYFECYKPEGAFYLFVKCDKIFGHKTKSGKIIANSNDFAEYLLEEAKVAVVPGIAFGLEGYFRISYATSMEELEEACIRIERACGSISIKSSLRGDA.

Positions 39, 125, and 175 each coordinate L-aspartate. The residue at position 239 (Lys239) is an N6-(pyridoxal phosphate)lysine. L-aspartate is bound at residue Arg375.

It belongs to the class-I pyridoxal-phosphate-dependent aminotransferase family. As to quaternary structure, homodimer. Pyridoxal 5'-phosphate is required as a cofactor.

It is found in the cytoplasm. The enzyme catalyses L-aspartate + 2-oxoglutarate = oxaloacetate + L-glutamate. The catalysed reaction is L-arogenate + 2-oxoglutarate = prephenate + L-glutamate. Catalyzes the reversible conversion of aspartate and 2-oxoglutarate to glutamate and oxaloacetate. Can also transaminate prephenate in the presence of glutamate. This chain is Probable aspartate/prephenate aminotransferase (aatA), found in Rickettsia felis (strain ATCC VR-1525 / URRWXCal2) (Rickettsia azadi).